The sequence spans 528 residues: Chromosomal replication initiator protein DnaA (528 aa).

Residues 1-104 (MNDDPNALAR…PVDDEPESDP (104 aa)) are domain I, interacts with DnaA modulators. Residues 95-158 (PVDDEPESDP…TDFEEVDDDR (64 aa)) are disordered. The span at 104–123 (PPSRDHRPEPEPLHTPRHLE) shows a compositional bias: basic and acidic residues. Residues 105-187 (PSRDHRPEPE…GPAPSATGGN (83 aa)) form a domain II region. Positions 149-158 (TDFEEVDDDR) are enriched in acidic residues. Residues 188 to 404 (SLNAKYTFDT…GALIRVTAFA (217 aa)) are domain III, AAA+ region. ATP-binding residues include G232, G234, K235, and T236. Positions 405-528 (SLNRQPLDLT…TARIKQRSKR (124 aa)) are domain IV, binds dsDNA.

It belongs to the DnaA family. Oligomerizes as a right-handed, spiral filament on DNA at oriC.

It is found in the cytoplasm. Functionally, plays an essential role in the initiation and regulation of chromosomal replication. ATP-DnaA binds to the origin of replication (oriC) to initiate formation of the DNA replication initiation complex once per cell cycle. Binds the DnaA box (a 9 base pair repeat at the origin) and separates the double-stranded (ds)DNA. Forms a right-handed helical filament on oriC DNA; dsDNA binds to the exterior of the filament while single-stranded (ss)DNA is stabiized in the filament's interior. The ATP-DnaA-oriC complex binds and stabilizes one strand of the AT-rich DNA unwinding element (DUE), permitting loading of DNA polymerase. After initiation quickly degrades to an ADP-DnaA complex that is not apt for DNA replication. Binds acidic phospholipids. The polypeptide is Chromosomal replication initiator protein DnaA (Rhodococcus jostii (strain RHA1)).